A 46-amino-acid chain; its full sequence is Cysteine-rich venom protein asurin-1 (46 aa).

The protein belongs to the CRISP family. Post-translationally, contains 8 disulfide bonds. In terms of tissue distribution, expressed by the venom gland.

The protein resides in the secreted. In terms of biological role, blocks contraction of smooth muscle elicited by high potassium-induced depolarization, but does not block caffeine-stimulated contraction. May target voltage-gated calcium channels on smooth muscle. The polypeptide is Cysteine-rich venom protein asurin-1 (Austrelaps superbus (Lowland copperhead snake)).